Reading from the N-terminus, the 230-residue chain is Peptidyl-prolyl cis-trans isomerase FKBP16-4, chloroplastic (230 aa).

Residues 1-56 constitute a chloroplast transit peptide; sequence MILTMKLVHPLHHSLSSSIPFPSRKRQSKPYRCSLPSPGCEKVIRTETVLPPAPVS. Positions 123-217 constitute a PPIase FKBP-type domain; that stretch reads GSRVAVHYVA…ELDIELLSIK (95 aa).

It belongs to the FKBP-type PPIase family.

It localises to the plastid. It is found in the chloroplast thylakoid lumen. The enzyme catalyses [protein]-peptidylproline (omega=180) = [protein]-peptidylproline (omega=0). In terms of biological role, PPIases accelerate the folding of proteins. It catalyzes the cis-trans isomerization of proline imidic peptide bonds in oligopeptides. The protein is Peptidyl-prolyl cis-trans isomerase FKBP16-4, chloroplastic (FKBP16-4) of Arabidopsis thaliana (Mouse-ear cress).